The following is a 213-amino-acid chain: Triosephosphate isomerase (213 aa).

Position 7–9 (7–9 (NLK)) interacts with substrate. His88 acts as the Electrophile in catalysis. Glu136 (proton acceptor) is an active-site residue. The substrate site is built by Ile141 and Gly174.

This sequence belongs to the triosephosphate isomerase family. In terms of assembly, homotetramer; dimer of dimers.

It is found in the cytoplasm. The catalysed reaction is D-glyceraldehyde 3-phosphate = dihydroxyacetone phosphate. It functions in the pathway carbohydrate biosynthesis; gluconeogenesis. It participates in carbohydrate degradation; glycolysis; D-glyceraldehyde 3-phosphate from glycerone phosphate: step 1/1. Its function is as follows. Involved in the gluconeogenesis. Catalyzes stereospecifically the conversion of dihydroxyacetone phosphate (DHAP) to D-glyceraldehyde-3-phosphate (G3P). This Thermoplasma volcanium (strain ATCC 51530 / DSM 4299 / JCM 9571 / NBRC 15438 / GSS1) protein is Triosephosphate isomerase.